A 214-amino-acid polypeptide reads, in one-letter code: Ribonuclease HII (214 aa).

Residues 26 to 214 enclose the RNase H type-2 domain; sequence EIVCGVDEAG…PVREAFDLIR (189 aa). Residues Asp32, Glu33, and Asp124 each contribute to the a divalent metal cation site.

The protein belongs to the RNase HII family. Requires Mn(2+) as cofactor. It depends on Mg(2+) as a cofactor.

The protein resides in the cytoplasm. The catalysed reaction is Endonucleolytic cleavage to 5'-phosphomonoester.. In terms of biological role, endonuclease that specifically degrades the RNA of RNA-DNA hybrids. This chain is Ribonuclease HII, found in Burkholderia pseudomallei (strain 1710b).